A 150-amino-acid polypeptide reads, in one-letter code: Transthyretin (150 aa).

A signal peptide spans 1–20 (MASYRLLLLCLAGLVFVSEA). A Sulfocysteine modification is found at Cys-30. Lys-35 contacts L-thyroxine. Glu-62 carries the 4-carboxyglutamate modification. Residue Glu-74 participates in L-thyroxine binding. An N-linked (GlcNAc...) asparagine glycan is attached at Asn-118. Residue Ser-137 coordinates L-thyroxine.

This sequence belongs to the transthyretin family. In terms of assembly, homotetramer. Dimer of dimers. In the homotetramer, subunits assemble around a central channel that can accommodate two ligand molecules. Interacts with RBP4. In terms of processing, sulfonation of the reactive cysteine Cys-30 enhances the stability of the native conformation of TTR, avoiding misassembly of the protein leading to amyloid formation. In terms of tissue distribution, detected in plasma and cerebrospinal fluid (at protein level). Highly expressed in the choroid plexus. Detected in liver.

It is found in the secreted. Functionally, thyroid hormone-binding protein. Probably transports thyroxine from the bloodstream to the brain. This Sus scrofa (Pig) protein is Transthyretin (TTR).